Here is a 236-residue protein sequence, read N- to C-terminus: 2-C-methyl-D-erythritol 4-phosphate cytidylyltransferase (236 aa).

The protein belongs to the IspD/TarI cytidylyltransferase family. IspD subfamily. Homodimer.

It carries out the reaction 2-C-methyl-D-erythritol 4-phosphate + CTP + H(+) = 4-CDP-2-C-methyl-D-erythritol + diphosphate. It participates in isoprenoid biosynthesis; isopentenyl diphosphate biosynthesis via DXP pathway; isopentenyl diphosphate from 1-deoxy-D-xylulose 5-phosphate: step 2/6. Functionally, catalyzes the formation of 4-diphosphocytidyl-2-C-methyl-D-erythritol from CTP and 2-C-methyl-D-erythritol 4-phosphate (MEP). The chain is 2-C-methyl-D-erythritol 4-phosphate cytidylyltransferase from Salmonella agona (strain SL483).